Consider the following 1286-residue polypeptide: Lysine-specific demethylase JMJ705 (1286 aa).

A JmjN domain is found at 25-66; sequence APEFRPTAAEFADPVSYILKIEPAAAPYGICKVVPPLPPPPK. The disordered stretch occupies residues 82–105; sequence PDDRSPSFPTRHQQVGLCPRRTRP. The region spanning 201-367 is the JmjC domain; sequence ETAWNMRGVA…IAKEAAIRRA (167 aa). H244, E246, and H335 together coordinate Fe cation. Over residues 641 to 679 the composition is skewed to polar residues; sequence PNSSNNVGCVGTKLSSSSTERQERPSSQNAHCNGSSVIS. Disordered regions lie at residues 641-686, 1013-1060, and 1077-1164; these read PNSS…KGVR, AEPV…HSQE, and PAGT…PKQA. Polar residues predominate over residues 1119–1136; sequence HASGQKSNVQEANANSAS. A C2H2-type 1; degenerate zinc finger spans residues 1167–1189; that stretch reads YSCDIEGCSMSFRTKRDLSLHKS. 3 consecutive C2H2-type zinc fingers follow at residues 1190-1214, 1220-1244, and 1250-1276; these read DICPVKGCGKKFFSHKYLLQHRKVH, LTCPWKGCNMAFKWPWARTEHLRVH, and YVCHEPGCAQTFRFVSDFSRHKRKTGH.

Requires Fe(2+) as cofactor. In terms of tissue distribution, expressed in leaves and flag leaves. Expressed at low levels in roots, shoots, stems and panicles.

It is found in the nucleus. The enzyme catalyses N(6),N(6),N(6)-trimethyl-L-lysyl(27)-[histone H3] + 2 2-oxoglutarate + 2 O2 = N(6)-methyl-L-lysyl(27)-[histone H3] + 2 formaldehyde + 2 succinate + 2 CO2. Its function is as follows. Histone demethylase that demethylates 'Lys-27' (H3K27me) of histone H3 with a specific activity for H3K27me3 and H3K27me2. No activity on H3K4me3, H3K9me3, H3K27me1 and H3K36me3. Involved in biotic stress response. May demethylate H3K27me3-marked defense-related genes and increase their basal and induced expression levels during pathogen infection. In Oryza sativa subsp. japonica (Rice), this protein is Lysine-specific demethylase JMJ705 (JMJ705).